Consider the following 380-residue polypeptide: Queuine tRNA-ribosyltransferase (380 aa).

Asp-96 serves as the catalytic Proton acceptor. Substrate contacts are provided by residues 96–100, Asp-150, Gln-193, and Gly-220; that span reads DSGGF. Residues 251–257 form an RNA binding region; sequence GVGAPDS. Catalysis depends on Asp-270, which acts as the Nucleophile. Residues 275–279 are RNA binding; important for wobble base 34 recognition; it reads TRIAR. 4 residues coordinate Zn(2+): Cys-308, Cys-310, Cys-313, and His-339.

The protein belongs to the queuine tRNA-ribosyltransferase family. As to quaternary structure, homodimer. Within each dimer, one monomer is responsible for RNA recognition and catalysis, while the other monomer binds to the replacement base PreQ1. The cofactor is Zn(2+).

The enzyme catalyses 7-aminomethyl-7-carbaguanine + guanosine(34) in tRNA = 7-aminomethyl-7-carbaguanosine(34) in tRNA + guanine. It participates in tRNA modification; tRNA-queuosine biosynthesis. Functionally, catalyzes the base-exchange of a guanine (G) residue with the queuine precursor 7-aminomethyl-7-deazaguanine (PreQ1) at position 34 (anticodon wobble position) in tRNAs with GU(N) anticodons (tRNA-Asp, -Asn, -His and -Tyr). Catalysis occurs through a double-displacement mechanism. The nucleophile active site attacks the C1' of nucleotide 34 to detach the guanine base from the RNA, forming a covalent enzyme-RNA intermediate. The proton acceptor active site deprotonates the incoming PreQ1, allowing a nucleophilic attack on the C1' of the ribose to form the product. After dissociation, two additional enzymatic reactions on the tRNA convert PreQ1 to queuine (Q), resulting in the hypermodified nucleoside queuosine (7-(((4,5-cis-dihydroxy-2-cyclopenten-1-yl)amino)methyl)-7-deazaguanosine). In Streptococcus pneumoniae (strain Hungary19A-6), this protein is Queuine tRNA-ribosyltransferase.